We begin with the raw amino-acid sequence, 452 residues long: Phosphoglucosamine mutase (452 aa).

Ser104 (phosphoserine intermediate) is an active-site residue. Mg(2+)-binding residues include Ser104, Asp246, Asp248, and Asp250. Position 104 is a phosphoserine (Ser104).

It belongs to the phosphohexose mutase family. It depends on Mg(2+) as a cofactor. In terms of processing, activated by phosphorylation.

It carries out the reaction alpha-D-glucosamine 1-phosphate = D-glucosamine 6-phosphate. Catalyzes the conversion of glucosamine-6-phosphate to glucosamine-1-phosphate. This Streptomyces avermitilis (strain ATCC 31267 / DSM 46492 / JCM 5070 / NBRC 14893 / NCIMB 12804 / NRRL 8165 / MA-4680) protein is Phosphoglucosamine mutase.